The sequence spans 556 residues: 2-isopropylmalate synthase (556 aa).

The region spanning 33–307 (PIWLSTDLRD…DPQLDFSDID (275 aa)) is the Pyruvate carboxyltransferase domain. Mg(2+) contacts are provided by aspartate 42, histidine 246, histidine 248, and asparagine 282. The interval 439 to 556 (ASAPYALKGH…ALSQAESRAA (118 aa)) is regulatory domain.

Belongs to the alpha-IPM synthase/homocitrate synthase family. LeuA type 2 subfamily. As to quaternary structure, homodimer. Mg(2+) is required as a cofactor.

It localises to the cytoplasm. The enzyme catalyses 3-methyl-2-oxobutanoate + acetyl-CoA + H2O = (2S)-2-isopropylmalate + CoA + H(+). It participates in amino-acid biosynthesis; L-leucine biosynthesis; L-leucine from 3-methyl-2-oxobutanoate: step 1/4. Catalyzes the condensation of the acetyl group of acetyl-CoA with 3-methyl-2-oxobutanoate (2-ketoisovalerate) to form 3-carboxy-3-hydroxy-4-methylpentanoate (2-isopropylmalate). This Ectopseudomonas mendocina (strain ymp) (Pseudomonas mendocina) protein is 2-isopropylmalate synthase.